The chain runs to 1064 residues: MPMLIQKSEVEYQTISSTQSHLAEEQSERLHRCISKEQLEKLHEAFLNAPERQVGIDDLRVMLEDLDITFNDSMYTRLFLKINQNRDFRVDWNEFVSYLIFGFQEEDPSSQKESLILPISVPPMVRKSEHRSAICCLALLKAKSDQVPIEEVTETVNFSFGGEDSPEASGMWVTASHEGMMRFWTSHMEPIRTASSESIHLNYAFYNNGKVHSKLILGDYAGNVRILSYSPHLRGPFQAKPGAALIEVVWSDVLKGKIPQFVPKEYISLHNEMISCVYFSLHMNALFASAEYRNTKKYRGRCPGMIMVTYDERSNFRIPLGVSTFFVAESHNIVVTGGPDTFVRIWDVYIPTEPSAILTGHNGGIVLVFVQPEENKVYSVDYQKIIKVWDLQEHTLLQTYGDLVRLIHHSETDLTYYYHSHLRELVVAGRKLISIKCCPRVRVDLTDGNTHAAPVSVVLYNRLFRNIVTCGLDSYIIVWDPWTGRRKIIMKSCHTKMIYGEIIDIEITAACFDPLEQFLLTGARDGSLKIWNYNNAVVVRNMSIMPDQEVTSVIWVVDRILAMGWDRQVTEFNDVVGREYGDPKKWPKFHTDDITCADVKLGEGVVTATYSGEIIFWKLETGQPYRRYSVMDPTRFIELKLTAEEEKSLRRSKRLASRPTHTGIHGLQMSRAGRSTVTNRPEDNRDYGANIPISVQAVLFLQTRPQTLKHGSVFISLDTGYIQVYSHHQRGGYMMEFLAVHKTGDCVLTMCTDRKNRFLYTGTAFGYVKIWYIVNFCVPASEKTHVCMPKLRLEFIFLRKELFLTRAKRAIRNQPEPLLVSSYKGHLKAINSIAFINLPKIVFTGSHDYSCRLWTQGGRYLGTLGTVLPWSKLTPFERAGDDSQTYRMPPDIKKVASSTTLKVISGLQAERMVKRQEGKVTEDRDEDTAQTEDVTELKRLLDSPIKEPILGKHFELPGRTVLDQHIELDTSQSYIAVYTHLKVHSTEMLERLPTPAVIGKVQAENYLHHYVPVEGKVDISGSSLNIKQPTRRRSGKTHDPRNIRTAKARLDIGMGLSSSHASQQ.

WD repeat units lie at residues 150-194 (EEVT…IRTA), 317-356 (RIPL…EPSA), 360-399 (GHNG…LLQT), 450-489 (THAA…RKII), 502-541 (IIDI…VVRN), 589-629 (FHTD…RRYS), 742-781 (KTGD…VPAS), and 825-864 (GHLK…LGTL). Residues 1022–1044 (SSLNIKQPTRRRSGKTHDPRNIR) form a disordered region.

The polypeptide is WD repeat-containing protein on Y chromosome (Drosophila ananassae (Fruit fly)).